Consider the following 361-residue polypeptide: GTPase Obg (361 aa).

The Obg domain maps to 1–159 (MKFVDEAFID…KNLKLELKVL (159 aa)). In terms of domain architecture, OBG-type G spans 160–334 (ADVGLLGMPN…LIKTIYQHVK (175 aa)). Residues 166–173 (GMPNAGKS), 191–195 (FTTLH), 213–216 (DLPG), 284–287 (NKLD), and 315–317 (SAL) each bind GTP. Residues Ser-173 and Thr-193 each coordinate Mg(2+). Residues 339–361 (SEQPVEEVDPRFVPLPPESPETP) are disordered. A compositionally biased stretch (pro residues) spans 351-361 (VPLPPESPETP).

It belongs to the TRAFAC class OBG-HflX-like GTPase superfamily. OBG GTPase family. In terms of assembly, monomer. Requires Mg(2+) as cofactor.

It localises to the cytoplasm. Functionally, an essential GTPase which binds GTP, GDP and possibly (p)ppGpp with moderate affinity, with high nucleotide exchange rates and a fairly low GTP hydrolysis rate. Plays a role in control of the cell cycle, stress response, ribosome biogenesis and in those bacteria that undergo differentiation, in morphogenesis control. The polypeptide is GTPase Obg (Polaromonas sp. (strain JS666 / ATCC BAA-500)).